A 239-amino-acid chain; its full sequence is Probable transcriptional regulatory protein Pnuc_0618 (239 aa).

Residues 1–21 (MAGHSKWANIQHRKGRQDEKR) form a disordered region.

Belongs to the TACO1 family.

It is found in the cytoplasm. The polypeptide is Probable transcriptional regulatory protein Pnuc_0618 (Polynucleobacter asymbioticus (strain DSM 18221 / CIP 109841 / QLW-P1DMWA-1) (Polynucleobacter necessarius subsp. asymbioticus)).